Reading from the N-terminus, the 104-residue chain is L-rhamnose mutarotase (104 aa).

Substrate is bound at residue Tyr18. His22 acts as the Proton donor in catalysis. Substrate-binding positions include Tyr41 and 76–77; that span reads WW.

It belongs to the rhamnose mutarotase family. Homodimer.

Its subcellular location is the cytoplasm. The catalysed reaction is alpha-L-rhamnose = beta-L-rhamnose. Its pathway is carbohydrate metabolism; L-rhamnose metabolism. In terms of biological role, involved in the anomeric conversion of L-rhamnose. The polypeptide is L-rhamnose mutarotase (Escherichia coli O8 (strain IAI1)).